We begin with the raw amino-acid sequence, 1230 residues long: MARAKLPRSPSEGKAGPGGAPAGAAAPEEPHGLSPLLPARGGGSVGSDVGQRLPVEDFSLDSSLSQVQVEFYVNENTFKERLKLFFIKNQRSSLRIRLFNFSLKLLTCLLYIVRVLLDDPALGIGCWGCPKQNYSFNDSSSEINWAPILWVERKMTLWAIQVIVAIISFLETMLLIYLSYKGNIWEQIFRVSFVLEMINTLPFIITIFWPPLRNLFIPVFLNCWLAKHALENMINDFHRAILRTQSAMFNQVLILFCTLLCLVFTGTCGIQHLERAGENLSLLTSFYFCIVTFSTVGYGDVTPKIWPSQLLVVIMICVALVVLPLQFEELVYLWMERQKSGGNYSRHRAQTEKHVVLCVSSLKIDLLMDFLNEFYAHPRLQDYYVVILCPTEMDVQVRRVLQIPLWSQRVIYLQGSALKDQDLMRAKMDNGEACFILSSRNEVDRTAADHQTILRAWAVKDFAPNCPLYVQILKPENKFHVKFADHVVCEEECKYAMLALNCICPATSTLITLLVHTSRGQEGQESPEQWQRMYGRCSGNEVYHIRMGDSKFFREYEGKSFTYAAFHAHKKYGVCLIGLKREDNKSILLNPGPRHILAASDTCFYINITKEENSAFIFKQEEKRKKRAFSGQGLHEGPARLPVHSIIASMGTVAMDLQGTEHRPTQSGGGGGGSKLALPTENGSGSRRPSIAPVLELADSSALLPCDLLSDQSEDEVTPSDDEGLSVVEYVKGYPPNSPYIGSSPTLCHLLPVKAPFCCLRLDKGCKHNSYEDAKAYGFKNKLIIVSAETAGNGLYNFIVPLRAYYRSRKELNPIVLLLDNKPDHHFLEAICCFPMVYYMEGSVDNLDSLLQCGIIYADNLVVVDKESTMSAEEDYMADAKTIVNVQTMFRLFPSLSITTELTHPSNMRFMQFRAKDSYSLALSKLEKRERENGSNLAFMFRLPFAAGRVFSISMLDTLLYQSFVKDYMITITRLLLGLDTTPGSGYLCAMKITEGDLWIRTYGRLFQKLCSSSAEIPIGIYRTESHVFSTSESQISVNVEDCEDTREVKGPWGSRAGTGGSSQGRHTGGGDPAEHPLLRRKSLQWARRLSRKAPKQAGRAAAAEWISQQRLSLYRRSERQELSELVKNRMKHLGLPTTGYEDVANLTASDVMNRVNLGYLQDEMNDHQNTLSYVLINPPPDTRLEPSDIVYLIRSDPLAHVASSSQSRKSSCSHKLSSCNPETRDETQL.

The tract at residues Met1 to Leu37 is disordered. Residues Met1–Ser93 are Cytoplasmic-facing. A helical membrane pass occupies residues Leu94–Cys126. Residues Trp127–Arg153 lie on the Extracellular side of the membrane. N-linked (GlcNAc...) asparagine glycosylation is found at Asn133 and Asn137. A helical membrane pass occupies residues Lys154–Leu178. Over Ser179 to Ser192 the chain is Cytoplasmic. Residues Phe193–Phe208 traverse the membrane as a helical segment. The Extracellular segment spans residues Trp209–Leu215. The chain crosses the membrane as a helical span at residues Phe216–Met233. The Cytoplasmic segment spans residues Ile234 to Ser246. The chain crosses the membrane as a helical span at residues Ala247–Glu274. The Extracellular segment spans residues Arg275–Ser281. The pore-forming intramembrane region spans Leu282 to Thr302. K(+) is bound by residues Val296 and Gly297. Residues Pro303 to Lys304 lie on the Extracellular side of the membrane. A helical membrane pass occupies residues Ile305 to Gln338. The Cytoplasmic portion of the chain corresponds to Lys339 to Leu1230. The RCK N-terminal 1 domain maps to Glu352–Val488. 4 residues coordinate Na(+): Leu513, His516, Ser538, and Asn540. A disordered region spans residues Thr660–Pro689. Zn(2+)-binding residues include Cys758 and Cys759. 2 residues coordinate K(+): Arg761 and Lys764. 2 residues coordinate Na(+): Arg761 and Lys764. Residues Cys766 and His768 each coordinate Zn(2+). Residues Asn769, Tyr771, Tyr777, and Gly778 each contribute to the K(+) site. A Na(+)-binding site is contributed by Tyr771. Phe779 serves as a coordination point for Na(+). One can recognise an RCK N-terminal 2 domain in the interval Asn781–Leu921. 5 residues coordinate K(+): Ser787, Leu818, Asp820, Gly842, and Asp865. Disordered stretches follow at residues Glu1048–Leu1078 and Ser1204–Leu1230. Residues Ala1057–Asp1072 show a composition bias toward gly residues. The segment covering Ser1204–Ser1219 has biased composition (low complexity).

It belongs to the potassium channel family. Calcium-activated (TC 1.A.1.3) subfamily. KCa4.1/KCNT1 sub-subfamily. In terms of assembly, homotetramer; which constitutes the Na(+)-activated K(+) channel. Interacts with KCNT2; these heterodimer channels differ from the homomers in their unitary conductance, kinetic behavior, subcellular localization, and response to activation of protein kinase C. Interacts (via C-terminus) with FMR1; this interaction alters gating properties of KCNT1. Interacts with CRBN via its cytoplasmic C-terminus. Phosphorylated by protein kinase C. Phosphorylation of the C-terminal domain increases channel activity. In terms of tissue distribution, highest expression in liver, brain and spinal cord. Lowest expression in skeletal muscle.

It is found in the cell membrane. The catalysed reaction is K(+)(in) = K(+)(out). Its activity is regulated as follows. Activated by high intracellular Na(+). In addition to activation by Na(+), is cooperatively activated by intracellular Cl(-) levels. Inhibited by Zn(2+). Activated upon stimulation of G-protein coupled receptors, such as CHRM1 and GRIA1. Its function is as follows. Sodium-activated K(+) channel. Acts as an important mediator of neuronal membrane excitability. Contributes to the delayed outward currents. Regulates neuronal bursting in sensory neurons. Contributes to synaptic development and plasticity. In Homo sapiens (Human), this protein is Potassium channel subfamily T member 1.